Here is a 658-residue protein sequence, read N- to C-terminus: DNA ligase (658 aa).

Residues 31 to 35 (DFEYD), 80 to 81 (SL), and Glu-110 contribute to the NAD(+) site. Lys-112 functions as the N6-AMP-lysine intermediate in the catalytic mechanism. Residues Arg-133, Glu-167, Lys-279, and Lys-303 each contribute to the NAD(+) site. The Zn(2+) site is built by Cys-397, Cys-400, Cys-415, and Cys-420. Positions 584-654 (DTASIYFQKS…KALNIPIINE (71 aa)) constitute a BRCT domain.

It belongs to the NAD-dependent DNA ligase family. LigA subfamily. Mg(2+) serves as cofactor. Requires Mn(2+) as cofactor.

The enzyme catalyses NAD(+) + (deoxyribonucleotide)n-3'-hydroxyl + 5'-phospho-(deoxyribonucleotide)m = (deoxyribonucleotide)n+m + AMP + beta-nicotinamide D-nucleotide.. In terms of biological role, DNA ligase that catalyzes the formation of phosphodiester linkages between 5'-phosphoryl and 3'-hydroxyl groups in double-stranded DNA using NAD as a coenzyme and as the energy source for the reaction. It is essential for DNA replication and repair of damaged DNA. The polypeptide is DNA ligase (Mycoplasma pneumoniae (strain ATCC 29342 / M129 / Subtype 1) (Mycoplasmoides pneumoniae)).